Here is a 682-residue protein sequence, read N- to C-terminus: DNA-directed RNA polymerase subunit beta' (682 aa).

4 residues coordinate Zn(2+): Cys-69, Cys-71, Cys-87, and Cys-90. Mg(2+) is bound by residues Asp-489, Asp-491, and Asp-493.

This sequence belongs to the RNA polymerase beta' chain family. RpoC1 subfamily. In terms of assembly, in plastids the minimal PEP RNA polymerase catalytic core is composed of four subunits: alpha, beta, beta', and beta''. When a (nuclear-encoded) sigma factor is associated with the core the holoenzyme is formed, which can initiate transcription. Mg(2+) serves as cofactor. Zn(2+) is required as a cofactor.

Its subcellular location is the plastid. It localises to the chloroplast. The enzyme catalyses RNA(n) + a ribonucleoside 5'-triphosphate = RNA(n+1) + diphosphate. Its function is as follows. DNA-dependent RNA polymerase catalyzes the transcription of DNA into RNA using the four ribonucleoside triphosphates as substrates. The polypeptide is DNA-directed RNA polymerase subunit beta' (Hordeum vulgare (Barley)).